Reading from the N-terminus, the 1235-residue chain is Myosin-1 (1235 aa).

Positions 1–34 are disordered; that stretch reads MGITKRSKDKAARAERSAGGDKSSSAKPKKATFD. Basic and acidic residues predominate over residues 9 to 19; it reads DKAARAERSAG. The Myosin motor domain maps to 41–715; it reads IGVSDLTLLS…TLFALEHMRD (675 aa). 134–141 is an ATP binding site; sequence GESGAGKT. An actin-binding region spans residues 405 to 487; that stretch reads SIGILDIYGF…PGIFSAMKDA (83 aa). 2 IQ domains span residues 719–739 and 740–765; these read HNMA…RAEA and AIRI…EGHK. A TH1 domain is found at 773–962; sequence RRRMSILGSR…TVHTQPGEPP (190 aa). Disordered stretches follow at residues 949-1076 and 1135-1235; these read YKSS…AAKP and APPV…EDDW. A compositionally biased stretch (low complexity) spans 982–1046; that stretch reads KGKLIKPGGP…PGAAATPAAA (65 aa). Over residues 1050–1062 the composition is skewed to polar residues; the sequence is PSHTRQQSSTSTV. Residues 1063–1073 are compositionally biased toward pro residues; sequence RPPPPPPPAPA. The region spanning 1075–1134 is the SH3 domain; that stretch reads KPKIMAKVLYDFAGTRENELSIKAGDMIEIVQKENNGWWLAKTPEGQAWVPAAYVEEQAP. A compositionally biased stretch (pro residues) spans 1135 to 1150; the sequence is APPVVAPRPPPPPPPA. Polar residues predominate over residues 1180–1210; sequence SLQNRDSGMSLNGANGSGSDASRSSTPTPSI.

It belongs to the TRAFAC class myosin-kinesin ATPase superfamily. Myosin family.

The protein resides in the cytoplasm. Its subcellular location is the cytoskeleton. It localises to the actin patch. Its function is as follows. Type-I myosin implicated in the organization of the actin cytoskeleton. Required for proper actin cytoskeleton polarization. At the cell cortex, assembles in patch-like structures together with proteins from the actin-polymerizing machinery and promotes actin assembly. Functions as actin nucleation-promoting factor (NPF) for the Arp2/3 complex. The sequence is that of Myosin-1 (myo-1) from Neurospora crassa (strain ATCC 24698 / 74-OR23-1A / CBS 708.71 / DSM 1257 / FGSC 987).